A 272-amino-acid chain; its full sequence is Phosphatidylglycerol--prolipoprotein diacylglyceryl transferase (272 aa).

The next 4 helical transmembrane spans lie at 21 to 41 (IAVHWYGIMYALALLSAIFVA), 60 to 80 (YIWWAEIGVILGARLGYVLFY), 101 to 121 (GVYAGISGMSYHGAFFGFIIA), and 131 to 151 (VSFWFITDIAVLGVSAAYIFG). Residue R152 participates in a 1,2-diacyl-sn-glycero-3-phospho-(1'-sn-glycerol) binding. 3 helical membrane-spanning segments follow: residues 181 to 201 (PSQIYEAILEGLFVFLILAFY), 209 to 229 (GQLALMYGILYAIARIIAEFF), and 244 to 264 (LTMGILQSLIILIICVGFYVV).

It belongs to the Lgt family.

It is found in the cell inner membrane. The catalysed reaction is L-cysteinyl-[prolipoprotein] + a 1,2-diacyl-sn-glycero-3-phospho-(1'-sn-glycerol) = an S-1,2-diacyl-sn-glyceryl-L-cysteinyl-[prolipoprotein] + sn-glycerol 1-phosphate + H(+). The protein operates within protein modification; lipoprotein biosynthesis (diacylglyceryl transfer). Functionally, catalyzes the transfer of the diacylglyceryl group from phosphatidylglycerol to the sulfhydryl group of the N-terminal cysteine of a prolipoprotein, the first step in the formation of mature lipoproteins. This Aliarcobacter butzleri (strain RM4018) (Arcobacter butzleri) protein is Phosphatidylglycerol--prolipoprotein diacylglyceryl transferase.